Reading from the N-terminus, the 183-residue chain is ATP synthase subunit b 2 (183 aa).

A helical transmembrane segment spans residues 27-47 (PSFYAFLALLIFFGLLLHMGV).

The protein belongs to the ATPase B chain family. As to quaternary structure, F-type ATPases have 2 components, F(1) - the catalytic core - and F(0) - the membrane proton channel. F(1) has five subunits: alpha(3), beta(3), gamma(1), delta(1), epsilon(1). F(0) has three main subunits: a(1), b(2) and c(10-14). The alpha and beta chains form an alternating ring which encloses part of the gamma chain. F(1) is attached to F(0) by a central stalk formed by the gamma and epsilon chains, while a peripheral stalk is formed by the delta and b chains.

The protein resides in the cell inner membrane. Its function is as follows. F(1)F(0) ATP synthase produces ATP from ADP in the presence of a proton or sodium gradient. F-type ATPases consist of two structural domains, F(1) containing the extramembraneous catalytic core and F(0) containing the membrane proton channel, linked together by a central stalk and a peripheral stalk. During catalysis, ATP synthesis in the catalytic domain of F(1) is coupled via a rotary mechanism of the central stalk subunits to proton translocation. Component of the F(0) channel, it forms part of the peripheral stalk, linking F(1) to F(0). This Maricaulis maris (strain MCS10) (Caulobacter maris) protein is ATP synthase subunit b 2.